A 197-amino-acid polypeptide reads, in one-letter code: Phosphoheptose isomerase (197 aa).

Residues 34-196 (MVHCLLGGNK…DRTLFPQDEQ (163 aa)) form the SIS domain. Position 49–51 (49–51 (NGG)) interacts with substrate. Zn(2+) is bound by residues histidine 58 and glutamate 62. Substrate contacts are provided by residues glutamate 62, 91–92 (ND), 117–119 (STS), serine 122, and glutamine 172. The Zn(2+) site is built by glutamine 172 and histidine 180.

The protein belongs to the SIS family. GmhA subfamily. As to quaternary structure, homotetramer. Requires Zn(2+) as cofactor.

The protein localises to the cytoplasm. It carries out the reaction 2 D-sedoheptulose 7-phosphate = D-glycero-alpha-D-manno-heptose 7-phosphate + D-glycero-beta-D-manno-heptose 7-phosphate. The protein operates within carbohydrate biosynthesis; D-glycero-D-manno-heptose 7-phosphate biosynthesis; D-glycero-alpha-D-manno-heptose 7-phosphate and D-glycero-beta-D-manno-heptose 7-phosphate from sedoheptulose 7-phosphate: step 1/1. Catalyzes the isomerization of sedoheptulose 7-phosphate in D-glycero-D-manno-heptose 7-phosphate. This Shewanella baltica (strain OS223) protein is Phosphoheptose isomerase.